Reading from the N-terminus, the 121-residue chain is Type II secretion system protein I (121 aa).

Positions 1–6 (MRRQKG) are cleaved as a propeptide — leader sequence. N-methylmethionine is present on Met7. A helical membrane pass occupies residues 7 to 27 (MTLVEVLVALSVFALAGIAVL).

It belongs to the GSP I family. In terms of assembly, type II secretion is composed of four main components: the outer membrane complex, the inner membrane complex, the cytoplasmic secretion ATPase and the periplasm-spanning pseudopilus. Interacts with core component OutG. Cleaved by prepilin peptidase. Post-translationally, methylated by prepilin peptidase at the amino group of the N-terminal methionine once the leader sequence is cleaved by prepilin peptidase.

The protein localises to the cell inner membrane. In terms of biological role, component of the type II secretion system required for the energy-dependent secretion of extracellular factors such as proteases and toxins from the periplasm. Part of the pseudopilus tip complex that is critical for the recognition and binding of secretion substrates. This is Type II secretion system protein I (outI) from Pectobacterium carotovorum subsp. carotovorum (Erwinia carotovora subsp. carotovora).